A 492-amino-acid polypeptide reads, in one-letter code: Homoserine O-acetyltransferase (492 aa).

An AB hydrolase-1 domain is found at 47–354; it reads NVILVCHALT…NYGHDAFLLE (308 aa). S152 acts as the Nucleophile in catalysis. R221 provides a ligand contact to substrate. Catalysis depends on residues D315 and H348. Residue D349 coordinates substrate. CBS domains follow at residues 375–432 and 436–492; these read MKLD…FTTL and LTKN…HRCT.

It belongs to the AB hydrolase superfamily. MetX family. Homodimer.

It is found in the cytoplasm. It catalyses the reaction L-homoserine + acetyl-CoA = O-acetyl-L-homoserine + CoA. It functions in the pathway amino-acid biosynthesis; L-methionine biosynthesis via de novo pathway; O-acetyl-L-homoserine from L-homoserine: step 1/1. Functionally, transfers an acetyl group from acetyl-CoA to L-homoserine, forming acetyl-L-homoserine. This chain is Homoserine O-acetyltransferase, found in Methanosalsum zhilinae (strain DSM 4017 / NBRC 107636 / OCM 62 / WeN5) (Methanohalophilus zhilinae).